Here is a 162-residue protein sequence, read N- to C-terminus: Tegument protein BLRF2 (162 aa).

Residues 12-43 (VKAVDMSMEDMAARLARLESENKALKQQVLRG) are a coiled coil. Positions 118–162 (SMLGAKGQPSPGEGTRPRESNDPNATRRARSRSRGREAKKVQISD) are disordered. Basic and acidic residues predominate over residues 151 to 162 (RGREAKKVQISD).

The protein belongs to the herpesviridae BLRF2 family. In terms of assembly, homooligomer; homooligomerizes and binds double-stranded DNA (dsDNA) cooperatively. Interacts with host CGAS.

It localises to the virion tegument. It is found in the host cytoplasm. Its function is as follows. Plays a role in the inhibition of host innate immune system by targeting the CGAS enzymatic activity which is the principal cytosolic DNA sensor that detects invading viral DNA. Acts by inhibiting CGAS-DNA phase separation: directly binds double-stranded DNA (dsDNA) in a length dependent but sequence independent manner and is able to form DNA-induced phase separation in infected cells. DNA phase separation of ORF52 mediates disruption of liquid-like droplets in which CGAS is activated, thereby preventing CGAS activity. The chain is Tegument protein BLRF2 from Homo sapiens (Human).